Reading from the N-terminus, the 431-residue chain is Gamma-glutamyl phosphate reductase (431 aa).

Belongs to the gamma-glutamyl phosphate reductase family.

Its subcellular location is the cytoplasm. It carries out the reaction L-glutamate 5-semialdehyde + phosphate + NADP(+) = L-glutamyl 5-phosphate + NADPH + H(+). The protein operates within amino-acid biosynthesis; L-proline biosynthesis; L-glutamate 5-semialdehyde from L-glutamate: step 2/2. Catalyzes the NADPH-dependent reduction of L-glutamate 5-phosphate into L-glutamate 5-semialdehyde and phosphate. The product spontaneously undergoes cyclization to form 1-pyrroline-5-carboxylate. In Bifidobacterium longum subsp. infantis (strain ATCC 15697 / DSM 20088 / JCM 1222 / NCTC 11817 / S12), this protein is Gamma-glutamyl phosphate reductase.